We begin with the raw amino-acid sequence, 794 residues long: Phenylalanine--tRNA ligase beta subunit (794 aa).

The 119-residue stretch at 40-158 (NSLNSELVLG…LKKYLGKDVK (119 aa)) folds into the tRNA-binding domain. The B5 domain maps to 402-477 (KNKTEFEIKI…RLYSYDNIQE (76 aa)). Positions 455, 461, 464, and 465 each coordinate Mg(2+). An FDX-ACB domain is found at 702-794 (SKFQSSSRDL…NVKKMKVVIR (93 aa)).

This sequence belongs to the phenylalanyl-tRNA synthetase beta subunit family. Type 1 subfamily. As to quaternary structure, tetramer of two alpha and two beta subunits. It depends on Mg(2+) as a cofactor.

The protein resides in the cytoplasm. It carries out the reaction tRNA(Phe) + L-phenylalanine + ATP = L-phenylalanyl-tRNA(Phe) + AMP + diphosphate + H(+). The chain is Phenylalanine--tRNA ligase beta subunit from Mycoplasma capricolum subsp. capricolum (strain California kid / ATCC 27343 / NCTC 10154).